The primary structure comprises 372 residues: Protein REVEILLE 7 (372 aa).

One can recognise an HTH myb-type domain in the interval 71 to 125 (TVTKQREKWSEEEHDRFLEAIKLYGRGWRQIQEHIGTKTAVQIRSHAQKFFSKMA). The H-T-H motif DNA-binding region spans 98–121 (WRQIQEHIGTKTAVQIRSHAQKFF). The segment at 124–204 (MAQEADSRSE…RCSSPNSCTS (81 aa)) is disordered. Over residues 145–155 (RPKRKPAHPYP) the composition is skewed to basic residues. Positions 156–169 (RKSPVPYTQSPPPN) are enriched in pro residues. Residues 178 to 204 (KSPTSVLSSFGSEDQVNRCSSPNSCTS) show a composition bias toward polar residues.

Its subcellular location is the nucleus. In terms of biological role, transcription factor involved in phytochrome A-mediated cotyledon opening. Controlled by the central oscillator mediated by LHY and CCA1. Part of a regulatory circadian feedback loop. Regulates its own expression. This Arabidopsis thaliana (Mouse-ear cress) protein is Protein REVEILLE 7 (RVE7).